Reading from the N-terminus, the 480-residue chain is Phosphoglucosamine mutase (480 aa).

Positions 1-41 (MPKHTKKDPREGAPSATGEPQKQAAGRKLFGTDGVRGVANQ) are disordered. S127 acts as the Phosphoserine intermediate in catalysis. Residues S127, D269, D271, and D273 each coordinate Mg(2+). S127 carries the post-translational modification Phosphoserine.

This sequence belongs to the phosphohexose mutase family. Mg(2+) is required as a cofactor. Post-translationally, activated by phosphorylation.

It catalyses the reaction alpha-D-glucosamine 1-phosphate = D-glucosamine 6-phosphate. Catalyzes the conversion of glucosamine-6-phosphate to glucosamine-1-phosphate. The chain is Phosphoglucosamine mutase from Sorangium cellulosum (strain So ce56) (Polyangium cellulosum (strain So ce56)).